The primary structure comprises 599 residues: Sulfite reductase [NADPH] flavoprotein alpha-component (599 aa).

The Flavodoxin-like domain occupies 64–202 (ITIISASQTG…AASEWRARVV (139 aa)). Residues 70 to 75 (SQTGNA), 117 to 120 (STQG), and 153 to 162 (LGDSSYEFFC) each bind FMN. An FAD-binding FR-type domain is found at 234-448 (DAPLAASLSV…IEHNDNFRLP (215 aa)). FAD contacts are provided by residues threonine 322, alanine 356, 386–389 (RLYS), 404–406 (TVG), tyrosine 410, and 419–422 (GGAS). Residues 519-520 (SR), 525-529 (KIYVQ), and aspartate 561 contribute to the NADP(+) site. FAD is bound at residue tyrosine 599.

The protein belongs to the NADPH-dependent sulphite reductase flavoprotein subunit CysJ family. In the N-terminal section; belongs to the flavodoxin family. It in the C-terminal section; belongs to the flavoprotein pyridine nucleotide cytochrome reductase family. Alpha(8)-beta(8). The alpha component is a flavoprotein, the beta component is a hemoprotein. Requires FAD as cofactor. FMN is required as a cofactor.

The catalysed reaction is hydrogen sulfide + 3 NADP(+) + 3 H2O = sulfite + 3 NADPH + 4 H(+). It participates in sulfur metabolism; hydrogen sulfide biosynthesis; hydrogen sulfide from sulfite (NADPH route): step 1/1. In terms of biological role, component of the sulfite reductase complex that catalyzes the 6-electron reduction of sulfite to sulfide. This is one of several activities required for the biosynthesis of L-cysteine from sulfate. The flavoprotein component catalyzes the electron flow from NADPH -&gt; FAD -&gt; FMN to the hemoprotein component. The protein is Sulfite reductase [NADPH] flavoprotein alpha-component of Escherichia coli O6:K15:H31 (strain 536 / UPEC).